The primary structure comprises 712 residues: Polyribonucleotide nucleotidyltransferase (712 aa).

D487 and D493 together coordinate Mg(2+). The 60-residue stretch at 554-613 (PKIITMTINPDKIRDVIGPSGKQINKIIEETGVKIDIEQDGTVFISSINQEMNDKAKKII) folds into the KH domain. Positions 623 to 691 (GEIYEGKVKR…KQGRVNLSRK (69 aa)) constitute an S1 motif domain.

This sequence belongs to the polyribonucleotide nucleotidyltransferase family. It depends on Mg(2+) as a cofactor.

It is found in the cytoplasm. It catalyses the reaction RNA(n+1) + phosphate = RNA(n) + a ribonucleoside 5'-diphosphate. In terms of biological role, involved in mRNA degradation. Catalyzes the phosphorolysis of single-stranded polyribonucleotides processively in the 3'- to 5'-direction. This is Polyribonucleotide nucleotidyltransferase from Bacillus cereus (strain AH187).